We begin with the raw amino-acid sequence, 364 residues long: Alanine racemase (364 aa).

Residue Lys35 is the Proton acceptor; specific for D-alanine of the active site. The residue at position 35 (Lys35) is an N6-(pyridoxal phosphate)lysine. Arg132 is a binding site for substrate. The Proton acceptor; specific for L-alanine role is filled by Tyr260. Met308 is a binding site for substrate.

Belongs to the alanine racemase family. The cofactor is pyridoxal 5'-phosphate.

The enzyme catalyses L-alanine = D-alanine. The protein operates within amino-acid biosynthesis; D-alanine biosynthesis; D-alanine from L-alanine: step 1/1. Catalyzes the interconversion of L-alanine and D-alanine. May also act on other amino acids. This chain is Alanine racemase (alr), found in Acidithiobacillus ferrooxidans (strain ATCC 23270 / DSM 14882 / CIP 104768 / NCIMB 8455) (Ferrobacillus ferrooxidans (strain ATCC 23270)).